The sequence spans 191 residues: MSELKTLSVRKRDGLGKGANRKLRAKTLVPGVFYNAEGLNVPIEMDTLPVEKLFEAVGRTTVFNIEVDDNGTKSTHPALFWQIQYHPVKNRFSHIDFRGVDLEKPVKIRVPLEFTGTAKGVKVGGKLEVYREALDISAKPLQMPSKITIDLTDLEIGKTISVNDLPLGEGVCAVADRNFAIVAVVSPKGEE.

The protein belongs to the bacterial ribosomal protein bL25 family. CTC subfamily. Part of the 50S ribosomal subunit; part of the 5S rRNA/L5/L18/L25 subcomplex. Contacts the 5S rRNA. Binds to the 5S rRNA independently of L5 and L18.

Its function is as follows. This is one of the proteins that binds to the 5S RNA in the ribosome where it forms part of the central protuberance. The polypeptide is Large ribosomal subunit protein bL25 (Nitratidesulfovibrio vulgaris (strain DSM 19637 / Miyazaki F) (Desulfovibrio vulgaris)).